Here is a 733-residue protein sequence, read N- to C-terminus: Catalase-peroxidase (733 aa).

Residues 1 to 24 (MTDDSTCPVTGGADKQVTGRGQSY) are disordered. Positions 96–219 (WHSAGTYRTL…LAAVQMGLIY (124 aa)) form a cross-link, tryptophyl-tyrosyl-methioninium (Trp-Tyr) (with M-245). His-97 serves as the catalytic Proton acceptor. The tryptophyl-tyrosyl-methioninium (Tyr-Met) (with W-96) cross-link spans 219 to 245 (YVNPEGPNGKPDPVAAAKDIRETFARM). His-260 provides a ligand contact to heme b.

It belongs to the peroxidase family. Peroxidase/catalase subfamily. As to quaternary structure, homodimer or homotetramer. Heme b is required as a cofactor. In terms of processing, formation of the three residue Trp-Tyr-Met cross-link is important for the catalase, but not the peroxidase activity of the enzyme.

It carries out the reaction H2O2 + AH2 = A + 2 H2O. The catalysed reaction is 2 H2O2 = O2 + 2 H2O. In terms of biological role, bifunctional enzyme with both catalase and broad-spectrum peroxidase activity. The protein is Catalase-peroxidase of Methanoregula boonei (strain DSM 21154 / JCM 14090 / 6A8).